Reading from the N-terminus, the 301-residue chain is Bifunctional protein FolD (301 aa).

NADP(+)-binding positions include 166-168, Ser-191, and Ile-232; that span reads GKS.

The protein belongs to the tetrahydrofolate dehydrogenase/cyclohydrolase family. As to quaternary structure, homodimer.

It catalyses the reaction (6R)-5,10-methylene-5,6,7,8-tetrahydrofolate + NADP(+) = (6R)-5,10-methenyltetrahydrofolate + NADPH. The catalysed reaction is (6R)-5,10-methenyltetrahydrofolate + H2O = (6R)-10-formyltetrahydrofolate + H(+). The protein operates within one-carbon metabolism; tetrahydrofolate interconversion. Functionally, catalyzes the oxidation of 5,10-methylenetetrahydrofolate to 5,10-methenyltetrahydrofolate and then the hydrolysis of 5,10-methenyltetrahydrofolate to 10-formyltetrahydrofolate. This chain is Bifunctional protein FolD, found in Orientia tsutsugamushi (strain Ikeda) (Rickettsia tsutsugamushi).